We begin with the raw amino-acid sequence, 187 residues long: MIRGGDIAKGTVLLNKGTPYLVVEREFVNPGKGAAFARVKMKNLRDGSVLMQTIKTADTVEDAVVDTHKCQYQYKDGDQFMFMDTESFESISVPAETIGDKEHYLREGDEYDILIWENEPIDVRIPTKMIFIVEQSENYIKGDTVSGATKPIVTETGLVVRVPLFIKQGEKILVNTETNEYQERVNS.

It belongs to the elongation factor P family.

Its subcellular location is the cytoplasm. It participates in protein biosynthesis; polypeptide chain elongation. In terms of biological role, involved in peptide bond synthesis. Stimulates efficient translation and peptide-bond synthesis on native or reconstituted 70S ribosomes in vitro. Probably functions indirectly by altering the affinity of the ribosome for aminoacyl-tRNA, thus increasing their reactivity as acceptors for peptidyl transferase. The protein is Elongation factor P of Treponema denticola (strain ATCC 35405 / DSM 14222 / CIP 103919 / JCM 8153 / KCTC 15104).